Here is a 1394-residue protein sequence, read N- to C-terminus: Ninein-like protein (1394 aa).

2 EF-hand domains span residues 8-43 (HYVS…LGLE) and 42-77 (LEEQ…VLSS). Disordered stretches follow at residues 77-99 (SGSG…SCAV) and 126-166 (KYGS…KEPQ). Residue Ser-149 is modified to Phosphoserine. A compositionally biased stretch (basic and acidic residues) spans 151 to 166 (ESLKSDEDAESAKEPQ). EF-hand domains lie at 197-232 (TPEN…IGLH) and 234-269 (LEKQ…HEPP). Ca(2+) is bound by residues Asp-247, Asp-249, Asp-251, Arg-253, and Glu-258. Coiled coils occupy residues 382–423 (RQEL…MDDC), 461–515 (WEQA…DSEK), and 544–584 (EQFT…SRQS). Positions 494–496 (KEN) match the KEN box motif. The interval 578-602 (LPRSRQSPAGTPGTHRRRIPGRGPA) is disordered. A D-box motif is present at residues 632-640 (RMQLETKVN). Positions 835–863 (EKEKLEQTYREQVEGLVQEADVLRALLKN) form a coiled coil. Over residues 866-893 (TVVSDQQERTPSSMSLGPDSRQQPTARQ) the composition is skewed to polar residues. A disordered region spans residues 866 to 977 (TVVSDQQERT…SARTLTGQGQ (112 aa)). Over residues 939-951 (RSSENLGVRDNHQ) the composition is skewed to basic and acidic residues. Coiled-coil stretches lie at residues 1057–1229 (SESE…ELTE) and 1269–1331 (GARV…LRKQ).

Interacts with gamma-tubulin and TUBGCP4. Interacts with anaphase promoting complex/cyclosome (APC/C). Interacts with CDC20 and FZR1. Interacts with LCA5 and USH2A. In terms of processing, phosphorylated by PLK1 which disrupts its centrosome association and interaction with gamma-tubulin. Ubiquitinated by the APC/C complex leading to its degradation.

The protein resides in the cytoplasm. The protein localises to the cytoskeleton. It is found in the microtubule organizing center. It localises to the centrosome. Functionally, involved in the microtubule organization in interphase cells. Overexpression induces the fragmentation of the Golgi, and causes lysosomes to disperse toward the cell periphery; it also interferes with mitotic spindle assembly. Involved in vesicle transport in photoreceptor cells. In Mus musculus (Mouse), this protein is Ninein-like protein (Ninl).